Here is a 365-residue protein sequence, read N- to C-terminus: MSTDITPSSAPQCPDHIVFEHVTKEFRTRSGTVRALDDVSLAIKRGSISAVIGHSGAGKSTLVRLINGLETPTRGRVLVDGTDVSQLSDKAMRPLRADIGMIFQQFNLFGSRTIYDNVAYPLKLAHWKKADEKKRITELLSFVGLTSKAWDHPDQLSGGQKQRVGIARALATKPSILLADESTSALDPETTADVLSLLKRVNAELGVTVVVITHEMEVVRSIAQQVSVLAAGHLVESGSARQVFAHPQSETTQRFLATIIGQHPNGEEQARLQSENPHARLVDVSSVASHSFGDALARISHTGASFQIVHGGVIEVHDGSLGNYTVALSGPAQAVEQAVQILEEVSNSAAPTTSATVPTPTEEAH.

Residues 17 to 256 (IVFEHVTKEF…PQSETTQRFL (240 aa)) enclose the ABC transporter domain. An ATP-binding site is contributed by 53–60 (GHSGAGKS). The tract at residues 346–365 (SNSAAPTTSATVPTPTEEAH) is disordered.

It belongs to the ABC transporter superfamily. Methionine importer (TC 3.A.1.24) family. In terms of assembly, the complex is composed of two ATP-binding proteins (MetN), two transmembrane proteins (MetI) and a solute-binding protein (MetQ).

The protein localises to the cell membrane. The catalysed reaction is L-methionine(out) + ATP + H2O = L-methionine(in) + ADP + phosphate + H(+). It carries out the reaction D-methionine(out) + ATP + H2O = D-methionine(in) + ADP + phosphate + H(+). Functionally, part of the ABC transporter complex MetNIQ involved in methionine import. Responsible for energy coupling to the transport system. This is Methionine import ATP-binding protein MetN from Cutibacterium acnes (strain DSM 16379 / KPA171202) (Propionibacterium acnes).